Here is a 674-residue protein sequence, read N- to C-terminus: MIHKNNYQQLRIGLASPEQIRAWAERILPTGEIVGKVTQPYTLHYKTHKPERDGLFCERIFGPIKSGFCACGNYQAVDNGKEFSSFCKQCGVEFTESRVRRYQMGYIELACPVTHVWYLKRLPSYIANLLAKPLNDLESLVYCDITYPNLYLARPIAEKPTLLQLKGFFKYEDQSWRYLFPRFFSTRGFEAFKSREIATGGDAVRKELASLNLKTVMECTYLEWKDLAKQKPTGNEWEDRGIQRIKDFMVRRIRLVKHFLYTDVKPEWMVLSLLPVLPPELRPMIEVSGGLLLTSDLNELYRKVIYRNNTLIDFLLRSEFTPEGLIVCQKRLVQEAVDALIDNGIRGQPIRDSHNRPYKSFSDIIEGKEGRFRENLLGKRVDYSGRSVIVVGPSLPLHRCGLPREMAIELFQAFVIRGLIGRYLAQNLRDAKNMIQNKEPIIWKILRDVMQGHPVLLNRAPTLHRLGIQAFQPILIEGRAIRLHPLVCGGFNADFDGDQMAVHVPLSLEAQAEARFLMLSHTNLLSPATGDPIAVPTQDMLLGLHILTIEDSQGIYGVRYFPYSKRNCTSFFKIPYFNSYDDVLRAKEQRQIHFYSPIWLRWKGFLRVITSINREFPIEIQYESSNISVHIYENYQIRKDKKGNRLSLYIRTTAGRVLFNQQIEEAIQGTLKAF.

Residues C69, C71, C87, and C90 each coordinate Zn(2+). The Mg(2+) site is built by D494, D496, and D498.

The protein belongs to the RNA polymerase beta' chain family. RpoC1 subfamily. In terms of assembly, in plastids the minimal PEP RNA polymerase catalytic core is composed of four subunits: alpha, beta, beta', and beta''. When a (nuclear-encoded) sigma factor is associated with the core the holoenzyme is formed, which can initiate transcription. Mg(2+) serves as cofactor. Requires Zn(2+) as cofactor.

The protein resides in the plastid. Its subcellular location is the chloroplast. It carries out the reaction RNA(n) + a ribonucleoside 5'-triphosphate = RNA(n+1) + diphosphate. Functionally, DNA-dependent RNA polymerase catalyzes the transcription of DNA into RNA using the four ribonucleoside triphosphates as substrates. In Psilotum nudum (Whisk fern), this protein is DNA-directed RNA polymerase subunit beta'.